Here is a 138-residue protein sequence, read N- to C-terminus: ATP synthase epsilon chain (138 aa).

The protein belongs to the ATPase epsilon chain family. F-type ATPases have 2 components, CF(1) - the catalytic core - and CF(0) - the membrane proton channel. CF(1) has five subunits: alpha(3), beta(3), gamma(1), delta(1), epsilon(1). CF(0) has three main subunits: a, b and c.

The protein resides in the cellular thylakoid membrane. Functionally, produces ATP from ADP in the presence of a proton gradient across the membrane. This chain is ATP synthase epsilon chain, found in Cyanothece sp. (strain PCC 7425 / ATCC 29141).